Here is a 916-residue protein sequence, read N- to C-terminus: Protein translocase subunit SecA (916 aa).

ATP-binding positions include glutamine 87, 105–109, and aspartate 507; that span reads GEGKT. Cysteine 900, cysteine 902, cysteine 911, and histidine 912 together coordinate Zn(2+).

This sequence belongs to the SecA family. Monomer and homodimer. Part of the essential Sec protein translocation apparatus which comprises SecA, SecYEG and auxiliary proteins SecDF-YajC and YidC. Zn(2+) serves as cofactor.

The protein localises to the cell inner membrane. Its subcellular location is the cytoplasm. It catalyses the reaction ATP + H2O + cellular proteinSide 1 = ADP + phosphate + cellular proteinSide 2.. Its function is as follows. Part of the Sec protein translocase complex. Interacts with the SecYEG preprotein conducting channel. Has a central role in coupling the hydrolysis of ATP to the transfer of proteins into and across the cell membrane, serving both as a receptor for the preprotein-SecB complex and as an ATP-driven molecular motor driving the stepwise translocation of polypeptide chains across the membrane. This chain is Protein translocase subunit SecA, found in Neisseria gonorrhoeae (strain NCCP11945).